We begin with the raw amino-acid sequence, 353 residues long: DNA-directed RNA polymerase subunit alpha (353 aa).

Residues methionine 1–asparagine 226 are alpha N-terminal domain (alpha-NTD). Residues alanine 241 to leucine 353 form an alpha C-terminal domain (alpha-CTD) region. Residues alanine 326 to leucine 353 are disordered. Residues glutamate 342–leucine 353 show a composition bias toward acidic residues.

Belongs to the RNA polymerase alpha chain family. Homodimer. The RNAP catalytic core consists of 2 alpha, 1 beta, 1 beta' and 1 omega subunit. When a sigma factor is associated with the core the holoenzyme is formed, which can initiate transcription.

The catalysed reaction is RNA(n) + a ribonucleoside 5'-triphosphate = RNA(n+1) + diphosphate. In terms of biological role, DNA-dependent RNA polymerase catalyzes the transcription of DNA into RNA using the four ribonucleoside triphosphates as substrates. The polypeptide is DNA-directed RNA polymerase subunit alpha (Rhodococcus jostii (strain RHA1)).